A 414-amino-acid polypeptide reads, in one-letter code: Voltage-gated ClC-type chloride channel ClcB (414 aa).

The next 11 membrane-spanning stretches (helical) occupy residues 5–25 (LVIS…FHQA), 54–74 (ALTP…YQRY), 116–136 (SAIG…SVFA), 147–167 (LWVA…PLAG), 169–189 (LFIA…PVVI), 220–240 (VQYF…PLFL), 255–275 (LLPP…SLIF), 292–312 (TPPG…AVLA), 327–347 (LFVG…WPVL), 353–373 (LLMA…APIM), and 381–401 (MTGE…ATTI).

It belongs to the chloride channel (TC 2.A.49) family. ClcB subfamily.

It is found in the cell inner membrane. Its function is as follows. Probably acts as an electrical shunt for an outwardly-directed proton pump that is linked to amino acid decarboxylation, as part of the extreme acid resistance (XAR) response. In Yersinia pestis, this protein is Voltage-gated ClC-type chloride channel ClcB.